The primary structure comprises 405 residues: L-carnitine CoA-transferase (405 aa).

Residues Lys97 and Arg104 each contribute to the CoA site. The Nucleophile role is filled by Asp169.

This sequence belongs to the CoA-transferase III family. CaiB subfamily. As to quaternary structure, homodimer.

The protein localises to the cytoplasm. It catalyses the reaction crotonobetainyl-CoA + (R)-carnitine = crotonobetaine + (R)-carnitinyl-CoA. The catalysed reaction is 4-(trimethylamino)butanoyl-CoA + (R)-carnitine = (R)-carnitinyl-CoA + 4-(trimethylamino)butanoate. Its pathway is amine and polyamine metabolism; carnitine metabolism. Catalyzes the reversible transfer of the CoA moiety from gamma-butyrobetainyl-CoA to L-carnitine to generate L-carnitinyl-CoA and gamma-butyrobetaine. Is also able to catalyze the reversible transfer of the CoA moiety from gamma-butyrobetainyl-CoA or L-carnitinyl-CoA to crotonobetaine to generate crotonobetainyl-CoA. In Salmonella typhi, this protein is L-carnitine CoA-transferase (caiB).